We begin with the raw amino-acid sequence, 449 residues long: Pentalenene oxygenase (449 aa).

A helical transmembrane segment spans residues 251 to 273 (VITVMAAGTETVAGTLTWIFHLL). Position 393 (Cys-393) interacts with heme.

It belongs to the cytochrome P450 family.

The protein localises to the membrane. It carries out the reaction pentalenene + 4 reduced [2Fe-2S]-[ferredoxin] + 2 O2 + 4 H(+) = pentalen-13-al + 4 oxidized [2Fe-2S]-[ferredoxin] + 3 H2O. Its pathway is antibiotic biosynthesis; neopentalenolactone biosynthesis. Catalyzes the conversion of pentalenene to pentalen-13-al by stepwise oxidation via pentalen-13-ol, a precursor of neopentalenolactone antibiotic. This is Pentalenene oxygenase (ptlI) from Streptomyces avermitilis (strain ATCC 31267 / DSM 46492 / JCM 5070 / NBRC 14893 / NCIMB 12804 / NRRL 8165 / MA-4680).